A 445-amino-acid polypeptide reads, in one-letter code: Phosphoglucosamine mutase (445 aa).

Ser102 serves as the catalytic Phosphoserine intermediate. Residues Ser102, Asp241, Asp243, and Asp245 each coordinate Mg(2+). Phosphoserine is present on Ser102.

The protein belongs to the phosphohexose mutase family. Requires Mg(2+) as cofactor. Activated by phosphorylation.

It catalyses the reaction alpha-D-glucosamine 1-phosphate = D-glucosamine 6-phosphate. Functionally, catalyzes the conversion of glucosamine-6-phosphate to glucosamine-1-phosphate. The protein is Phosphoglucosamine mutase of Escherichia coli O139:H28 (strain E24377A / ETEC).